A 242-amino-acid chain; its full sequence is Ribonuclease PH (242 aa).

Phosphate is bound by residues Arg89 and 127–129; that span reads GTR.

It belongs to the RNase PH family. Homohexameric ring arranged as a trimer of dimers.

The enzyme catalyses tRNA(n+1) + phosphate = tRNA(n) + a ribonucleoside 5'-diphosphate. Functionally, phosphorolytic 3'-5' exoribonuclease that plays an important role in tRNA 3'-end maturation. Removes nucleotide residues following the 3'-CCA terminus of tRNAs; can also add nucleotides to the ends of RNA molecules by using nucleoside diphosphates as substrates, but this may not be physiologically important. Probably plays a role in initiation of 16S rRNA degradation (leading to ribosome degradation) during starvation. This chain is Ribonuclease PH, found in Neisseria meningitidis serogroup A / serotype 4A (strain DSM 15465 / Z2491).